An 83-amino-acid chain; its full sequence is Heterin-1 (83 aa).

The N-terminal stretch at 1–22 is a signal peptide; sequence MNGKLLLVSLMVTMLVMQPAEA. A propeptide spanning residues 66 to 83 is cleaved from the precursor; it reads VAGQIPFDEFMDILHYRP.

The protein belongs to the non-disulfide-bridged peptide (NDBP) superfamily. Long chain multifunctional peptide (group 2) family. As to expression, expressed by the venom gland.

Its subcellular location is the secreted. It is found in the target cell membrane. Functionally, amphipathic peptide with potent activities against both Gram-positive and Gram-negative bacteria. Is the most active against the two Gram-positive Bacillus megaterium and Micrococcus luteus (MIC=4.0 uM for both). It has relatively low hemolytic activity against human erythrocytes. This chain is Heterin-1, found in Heterometrus spinifer (Asia giant forest scorpion).